The primary structure comprises 540 residues: GMP synthase [glutamine-hydrolyzing] (540 aa).

The region spanning 26–216 (LIIILDFGSQ…VYHICDCEPT (191 aa)) is the Glutamine amidotransferase type-1 domain. Residue Cys-103 is the Nucleophile of the active site. Catalysis depends on residues His-190 and Glu-192. A GMPS ATP-PPase domain is found at 217–415 (WTTAAFVEEA…IGLPEEIVQR (199 aa)). 244 to 250 (SGGVDSS) is an ATP binding site.

In terms of assembly, homodimer.

The catalysed reaction is XMP + L-glutamine + ATP + H2O = GMP + L-glutamate + AMP + diphosphate + 2 H(+). It functions in the pathway purine metabolism; GMP biosynthesis; GMP from XMP (L-Gln route): step 1/1. Catalyzes the synthesis of GMP from XMP. The protein is GMP synthase [glutamine-hydrolyzing] of Nostoc punctiforme (strain ATCC 29133 / PCC 73102).